The following is a 119-amino-acid chain: Holo-[acyl-carrier-protein] synthase (119 aa).

2 residues coordinate Mg(2+): D2 and E51.

The protein belongs to the P-Pant transferase superfamily. AcpS family. Mg(2+) serves as cofactor.

It is found in the cytoplasm. The catalysed reaction is apo-[ACP] + CoA = holo-[ACP] + adenosine 3',5'-bisphosphate + H(+). Transfers the 4'-phosphopantetheine moiety from coenzyme A to a Ser of acyl-carrier-protein. This chain is Holo-[acyl-carrier-protein] synthase, found in Chlorobium luteolum (strain DSM 273 / BCRC 81028 / 2530) (Pelodictyon luteolum).